Here is a 158-residue protein sequence, read N- to C-terminus: Proteinase inhibitor type-2 (158 aa).

The first 24 residues, 1–24 (MAIHKEVSFLAYLLVLGMLLFVSA), serve as a signal peptide directing secretion. 2 consecutive repeat copies span residues 29–86 (DAKA…HPKN) and 87–146 (PKAC…IEPK). Cystine bridges form between Cys-33–Cys-121, Cys-37–Cys-117, Cys-45–Cys-127, Cys-57–Cys-94, Cys-60–Cys-78, Cys-61–Cys-90, Cys-67–Cys-103, and Cys-120–Cys-138.

This sequence belongs to the protease inhibitor I20 (potato type II proteinase inhibitor) family.

The polypeptide is Proteinase inhibitor type-2 (Solanum tuberosum (Potato)).